The primary structure comprises 47 residues: uncharacterized protein (47 aa).

A helical transmembrane segment spans residues 28 to 45; the sequence is VMIWGCLPYFLYVLIRMF.

The protein localises to the cell membrane. This is an uncharacterized protein from Bacillus subtilis (strain 168).